Here is a 124-residue protein sequence, read N- to C-terminus: Small ribosomal subunit protein uS12 (124 aa).

Residues 1 to 32 (MPTINQLVRKGRRDKTAKVKTAALKGSPQRRG) are disordered. Aspartate 89 carries the post-translational modification 3-methylthioaspartic acid. The disordered stretch occupies residues 104–124 (TQGVKGRKQARSRYGAKKEKS). Residues 108 to 118 (KGRKQARSRYG) show a composition bias toward basic residues.

It belongs to the universal ribosomal protein uS12 family. Part of the 30S ribosomal subunit. Contacts proteins S8 and S17. May interact with IF1 in the 30S initiation complex.

Functionally, with S4 and S5 plays an important role in translational accuracy. In terms of biological role, interacts with and stabilizes bases of the 16S rRNA that are involved in tRNA selection in the A site and with the mRNA backbone. Located at the interface of the 30S and 50S subunits, it traverses the body of the 30S subunit contacting proteins on the other side and probably holding the rRNA structure together. The combined cluster of proteins S8, S12 and S17 appears to hold together the shoulder and platform of the 30S subunit. In Rhodococcus jostii (strain RHA1), this protein is Small ribosomal subunit protein uS12.